A 159-amino-acid chain; its full sequence is NADH-quinone oxidoreductase subunit I (159 aa).

2 consecutive 4Fe-4S ferredoxin-type domains span residues 51–80 and 90–119; these read RRYE…IEAD and TRYD…EGPN. Residues Cys60, Cys63, Cys66, Cys70, Cys99, Cys102, Cys105, and Cys109 each contribute to the [4Fe-4S] cluster site.

It belongs to the complex I 23 kDa subunit family. As to quaternary structure, NDH-1 is composed of 14 different subunits. Subunits NuoA, H, J, K, L, M, N constitute the membrane sector of the complex. Requires [4Fe-4S] cluster as cofactor.

The protein resides in the cell inner membrane. It carries out the reaction a quinone + NADH + 5 H(+)(in) = a quinol + NAD(+) + 4 H(+)(out). In terms of biological role, NDH-1 shuttles electrons from NADH, via FMN and iron-sulfur (Fe-S) centers, to quinones in the respiratory chain. The immediate electron acceptor for the enzyme in this species is believed to be ubiquinone. Couples the redox reaction to proton translocation (for every two electrons transferred, four hydrogen ions are translocated across the cytoplasmic membrane), and thus conserves the redox energy in a proton gradient. The protein is NADH-quinone oxidoreductase subunit I of Rickettsia akari (strain Hartford).